A 355-amino-acid polypeptide reads, in one-letter code: F-box only protein 32 (355 aa).

A Nuclear localization signal motif is present at residues Lys62–Asp67. Residues Leu169–Leu173 carry the Nuclear export signal motif. The region spanning Leu223–Gln271 is the F-box domain. Positions Arg280 to Lys295 match the Bipartite nuclear localization signal motif.

In terms of assembly, part of the SCF (SKP1-CUL1-F-box) E3 ubiquitin-protein ligase complex SCF(FBXO32) formed of CUL1, SKP1, RBX1 and FBXO32.

It is found in the cytoplasm. It localises to the nucleus. It participates in protein modification; protein ubiquitination. Its function is as follows. Substrate recognition component of a SCF (SKP1-CUL1-F-box protein) E3 ubiquitin-protein ligase complex which mediates the ubiquitination and subsequent proteasomal degradation of target proteins. Probably recognizes and binds to phosphorylated target proteins during skeletal muscle atrophy. Recognizes TERF1. This Sus scrofa (Pig) protein is F-box only protein 32 (FBXO32).